Consider the following 66-residue polypeptide: MTELSANHGGSAKGTENPFEYDYETVRKGGLIFAGLAFVVGLLILLSKRFRCGGSKKHRQVNEDEL.

Residues 29–46 (GGLIFAGLAFVVGLLILL) traverse the membrane as a helical segment.

This sequence belongs to the FXYD family. As to quaternary structure, regulatory subunit of the sodium/potassium-transporting ATPase which is composed of a catalytic alpha subunit, an auxiliary non-catalytic beta subunit and an additional regulatory subunit. Highest levels expressed in the kidney and spleen. Restricted to the basolateral membrane in renal epithelial cells and varies in its level of expression along the nephron.

The protein localises to the membrane. In terms of biological role, may be involved in forming the receptor site for cardiac glycoside binding or may modulate the transport function of the sodium ATPase. In Rattus norvegicus (Rat), this protein is Sodium/potassium-transporting ATPase subunit gamma (Fxyd2).